The sequence spans 710 residues: Choline transporter-like protein 5 (710 aa).

The tract at residues 1 to 21 is disordered; the sequence is MARKRKPPSSQGDPRRYDPDF. Residues 1-32 lie on the Cytoplasmic side of the membrane; it reads MARKRKPPSSQGDPRRYDPDFQGPTAKRTCTD. The helical transmembrane segment at 33–53 threads the bilayer; sequence VLCCLIFLLFILGYVLLGLLA. Over 54–236 the chain is Extracellular; sequence WAHGDPRKMA…KLLEDYATSW (183 aa). Residues Asn82 and Asn184 are each glycosylated (N-linked (GlcNAc...) asparagine). Residues 237 to 257 traverse the membrane as a helical segment; sequence KWILIGLTVAMALSWTFLILL. The Cytoplasmic segment spans residues 258-260; sequence RFT. A helical transmembrane segment spans residues 261–281; that stretch reads AGFLFWFFIFGVLGIIGYGIW. The Extracellular portion of the chain corresponds to 282–319; the sequence is YCFLEYSSIQQRPQSTFWMYGFGIQRRVNMFFHLKETW. Residues 320 to 340 form a helical membrane-spanning segment; that stretch reads FSMMIILSAIEIIIIIVLIFL. The Cytoplasmic portion of the chain corresponds to 341 to 345; sequence RTRIQ. A helical transmembrane segment spans residues 346–366; the sequence is VAIILLQEGSKAISYLPSALI. Topologically, residues 367 to 368 are extracellular; sequence YP. The helical transmembrane segment at 369–389 threads the bilayer; it reads VLTFILLSICISYWAVTAVFL. Over 390-454 the chain is Cytoplasmic; the sequence is ATSGVPIFKV…NYILTFQVYN (65 aa). A helical membrane pass occupies residues 455 to 475; sequence LFAFLWLINFVIALGQCALAG. Residues 476–509 lie on the Extracellular side of the membrane; it reads AFASYYWAMKKPDDIPPYPLFTAFGRAVRYHTGS. The helical transmembrane segment at 510–530 threads the bilayer; it reads LAFGSLILASVQMFKVIVEYL. Over 531–604 the chain is Cytoplasmic; that stretch reads DRRLKKAQNS…KVTVTDEVTY (74 aa). The helical transmembrane segment at 605-625 threads the bilayer; that stretch reads FVLLLGKVLVSGIVGVLAFLL. The Extracellular portion of the chain corresponds to 626-643; sequence FTERLQIIVDGPTTLNYY. A helical transmembrane segment spans residues 644-664; the sequence is WVPFLTLVFGSYMIAHGFFSV. Topologically, residues 665 to 710 are cytoplasmic; the sequence is YSMCVETIFICFLEDLERNEGSPSRPYFVTPALMNILLEQGKIKKQ.

This sequence belongs to the CTL (choline transporter-like) family.

It is found in the cell membrane. The enzyme catalyses choline(out) + n H(+)(in) = choline(in) + n H(+)(out). Its function is as follows. Choline/H+ antiporter. The protein is Choline transporter-like protein 5 (Slc44a5) of Mus musculus (Mouse).